The chain runs to 175 residues: MNIFLKKPLHPILIGKIGKAYGILGWVKFFSFTENKEKIFSYFPWFILKKKWEIIHVDKWKKHNNNFIIHIENILDRSTVSKFTNLEIFIDKSILPILKEDEYYWNDVIDCKVFNSRKEYLGKVINLIRNQNNDVLIIRNNLKKNNFKKIMIPFIHKKIVKYINVKHKIITVIWN.

One can recognise a PRC barrel domain in the interval 100 to 174; sequence EDEYYWNDVI…VKHKIITVIW (75 aa).

The protein belongs to the RimM family. As to quaternary structure, binds ribosomal protein uS19.

It localises to the cytoplasm. In terms of biological role, an accessory protein needed during the final step in the assembly of 30S ribosomal subunit, possibly for assembly of the head region. Essential for efficient processing of 16S rRNA. May be needed both before and after RbfA during the maturation of 16S rRNA. It has affinity for free ribosomal 30S subunits but not for 70S ribosomes. This is Ribosome maturation factor RimM from Buchnera aphidicola subsp. Schizaphis graminum (strain Sg).